The primary structure comprises 378 residues: Probable protein phosphatase 2C 55 (378 aa).

Disordered regions lie at residues 1–59 (MRRH…ASKG) and 79–115 (EGEA…GVGC). Residues 7–26 (LGLLRRAAASSTSAASSRAG) are compositionally biased toward low complexity. Over residues 92–104 (GGRRGRNSKRQPP) the composition is skewed to basic residues. The PPM-type phosphatase domain occupies 122 to 369 (SWGYSSFQGR…DNVTCIVLQF (248 aa)). Mn(2+) contacts are provided by aspartate 158, glycine 159, aspartate 321, and aspartate 360.

Belongs to the PP2C family. Mg(2+) is required as a cofactor. It depends on Mn(2+) as a cofactor.

The enzyme catalyses O-phospho-L-seryl-[protein] + H2O = L-seryl-[protein] + phosphate. It catalyses the reaction O-phospho-L-threonyl-[protein] + H2O = L-threonyl-[protein] + phosphate. In Oryza sativa subsp. japonica (Rice), this protein is Probable protein phosphatase 2C 55.